The primary structure comprises 932 residues: Alanine--tRNA ligase (932 aa).

Zn(2+)-binding residues include His-623, His-627, Cys-726, and His-730. Residues 893–916 (RVGGGGGGPPDFAQGGGPDVDSLD) are disordered. The segment covering 894-910 (VGGGGGGPPDFAQGGGP) has biased composition (gly residues).

This sequence belongs to the class-II aminoacyl-tRNA synthetase family. Zn(2+) is required as a cofactor.

It localises to the cytoplasm. It catalyses the reaction tRNA(Ala) + L-alanine + ATP = L-alanyl-tRNA(Ala) + AMP + diphosphate. Functionally, catalyzes the attachment of alanine to tRNA(Ala) in a two-step reaction: alanine is first activated by ATP to form Ala-AMP and then transferred to the acceptor end of tRNA(Ala). Also edits incorrectly charged Ser-tRNA(Ala) and Gly-tRNA(Ala) via its editing domain. This chain is Alanine--tRNA ligase, found in Natronomonas pharaonis (strain ATCC 35678 / DSM 2160 / CIP 103997 / JCM 8858 / NBRC 14720 / NCIMB 2260 / Gabara) (Halobacterium pharaonis).